A 318-amino-acid polypeptide reads, in one-letter code: Homeobox-leucine zipper protein ATHB-4 (318 aa).

2 disordered regions span residues 1 to 23 (MGERDDGLGLSLSLGNSQQKEPS) and 128 to 165 (ARGGDENEAERASCSRGGGSGGSDDEDGGNGDGSRKKL). A compositionally biased stretch (low complexity) spans 8 to 17 (LGLSLSLGNS). A compositionally biased stretch (basic and acidic residues) spans 128-140 (ARGGDENEAERAS). The homeobox DNA-binding region spans 160-219 (GSRKKLRLSKDQALVLEETFKEHSTLNPKQKLALAKQLNLRARQVEVWFQNRRARTKLKQ). The tract at residues 227 to 248 (LKRCCDNLTEENRRLQKEVSEL) is leucine-zipper.

Belongs to the HD-ZIP homeobox family. Class II subfamily.

It is found in the nucleus. Probable transcription factor. This Arabidopsis thaliana (Mouse-ear cress) protein is Homeobox-leucine zipper protein ATHB-4 (ATHB-4).